Reading from the N-terminus, the 599-residue chain is Flap endonuclease GEN-like 1 (599 aa).

Positions 1–96 (MGVGGNFWDL…ISRFFRSSGI (96 aa)) are N-domain. Residues 2–95 (GVGGNFWDLL…RISRFFRSSG (94 aa)) are XPG-N domain. Mg(2+)-binding residues include Asp31, Asp75, Glu140, Glu142, Asp161, Asp163, and Asp213. The XPG-I domain stretch occupies residues 128–213 (ELLGIPVLKA…IAISLLVGND (86 aa)). Positions 128–217 (ELLGIPVLKA…LLVGNDYDSG (90 aa)) are I-domain. Positions 213-407 (DYDSGGVLGI…LLPMLSTIYL (195 aa)) are 5'-3' exonuclease domain. 2 disordered regions span residues 522-545 (RESK…MGVQ) and 559-599 (AAGQ…LLFG). Composition is skewed to polar residues over residues 563 to 572 (SIETGGSSKA) and 580 to 590 (ATSTSSSNLTK).

It belongs to the XPG/RAD2 endonuclease family. GEN subfamily. The cofactor is Mg(2+).

It is found in the nucleus. Functionally, endonuclease which cleaves flap structures at the junction between single-stranded DNA and double-stranded DNA with a specific cleavage site in the 5' overhang strand exactly one nucleotide 3' of the branch point. Structure- and sequence-specific nuclease that resolves holliday junctions (HJs) by symmetrically oriented incisions in two opposing strands near the junction point, thus leading to ligatable products; HJs are physical links between homologous DNA molecules that arise as central intermediary structures during homologous recombination and repair in meiotic and somatic cells. Structure-specific nuclease with 5'-flap endonuclease activity, preferentially cleaving static flaps 5' overhang strand exactly one nucleotide in the 3' direction of the branch point. Also able to cleave double-stranded flap strand 1 exactly at the branch point. This chain is Flap endonuclease GEN-like 1, found in Arabidopsis thaliana (Mouse-ear cress).